The following is a 573-amino-acid chain: Acyl-coenzyme A synthetase ACSM1, mitochondrial (573 aa).

The transit peptide at 1–35 (MQWLKSFQICKVLQGFSLSPTQLHRRLFSRVGAPR) directs the protein to the mitochondrion. Position 81 is an N6-succinyllysine (lysine 81). An N6-acetyllysine; alternate modification is found at lysine 142. Lysine 142 is subject to N6-succinyllysine; alternate. The residue at position 179 (lysine 179) is an N6-succinyllysine. An N6-acetyllysine; alternate modification is found at lysine 200. Lysine 200 carries the N6-succinyllysine; alternate modification. An N6-acetyllysine modification is found at lysine 210. An ATP-binding site is contributed by 222–230 (TSGTTGYPK). N6-succinyllysine occurs at positions 233 and 324. Lysine 352 and lysine 387 each carry N6-acetyllysine; alternate. Residues lysine 352 and lysine 387 each carry the N6-succinyllysine; alternate modification. Aspartate 448 and arginine 463 together coordinate ATP. Lysine 501 is subject to N6-succinyllysine. Position 527 is an N6-acetyllysine (lysine 527). N6-acetyllysine; alternate is present on lysine 534. The residue at position 534 (lysine 534) is an N6-succinyllysine; alternate. N6-acetyllysine is present on lysine 545. Lysine 559 lines the ATP pocket.

It belongs to the ATP-dependent AMP-binding enzyme family. In terms of assembly, monomer. Mg(2+) serves as cofactor. Mn(2+) is required as a cofactor. Highly expressed in liver and kidney.

It is found in the mitochondrion matrix. The protein resides in the mitochondrion. It carries out the reaction a medium-chain fatty acid + ATP + CoA = a medium-chain fatty acyl-CoA + AMP + diphosphate. The enzyme catalyses benzoate + ATP + CoA = benzoyl-CoA + AMP + diphosphate. The catalysed reaction is (R)-lipoate + GTP + H(+) = (R)-lipoyl-GMP + diphosphate. It catalyses the reaction octanoate + ATP + CoA = octanoyl-CoA + AMP + diphosphate. It carries out the reaction decanoate + ATP + CoA = decanoyl-CoA + AMP + diphosphate. The enzyme catalyses dodecanoate + ATP + CoA = dodecanoyl-CoA + AMP + diphosphate. The catalysed reaction is tetradecanoate + ATP + CoA = tetradecanoyl-CoA + AMP + diphosphate. It catalyses the reaction hexanoate + ATP + CoA = hexanoyl-CoA + AMP + diphosphate. It carries out the reaction butanoate + ATP + CoA = butanoyl-CoA + AMP + diphosphate. The enzyme catalyses hexadecanoate + ATP + CoA = hexadecanoyl-CoA + AMP + diphosphate. Its function is as follows. Catalyzes the activation of fatty acids by CoA to produce an acyl-CoA, the first step in fatty acid metabolism. Capable of activating medium-chain fatty acids (e.g. butyric (C4) to decanoic (C10) acids), and certain carboxylate-containing xenobiotics, e.g. benzoate. Also catalyzes the activation of lipoate to lipoyl-nucleoside monophosphate. Activates lipoate with GTP at a 1000-fold higher rate than with ATP and activates both (R)- and (S)-lipoate to the respective lipoyl-GMP, with a preference for (R)-lipoate. The chain is Acyl-coenzyme A synthetase ACSM1, mitochondrial (Acsm1) from Mus musculus (Mouse).